The following is an 81-amino-acid chain: Sulfur carrier protein TusA (81 aa).

Cys19 functions as the Cysteine persulfide intermediate in the catalytic mechanism.

This sequence belongs to the sulfur carrier protein TusA family.

The protein resides in the cytoplasm. In terms of biological role, sulfur carrier protein which probably makes part of a sulfur-relay system. The protein is Sulfur carrier protein TusA of Vibrio vulnificus (strain CMCP6).